The following is a 575-amino-acid chain: Proline--tRNA ligase (575 aa).

It belongs to the class-II aminoacyl-tRNA synthetase family. ProS type 1 subfamily. In terms of assembly, homodimer.

It localises to the cytoplasm. It catalyses the reaction tRNA(Pro) + L-proline + ATP = L-prolyl-tRNA(Pro) + AMP + diphosphate. Its function is as follows. Catalyzes the attachment of proline to tRNA(Pro) in a two-step reaction: proline is first activated by ATP to form Pro-AMP and then transferred to the acceptor end of tRNA(Pro). As ProRS can inadvertently accommodate and process non-cognate amino acids such as alanine and cysteine, to avoid such errors it has two additional distinct editing activities against alanine. One activity is designated as 'pretransfer' editing and involves the tRNA(Pro)-independent hydrolysis of activated Ala-AMP. The other activity is designated 'posttransfer' editing and involves deacylation of mischarged Ala-tRNA(Pro). The misacylated Cys-tRNA(Pro) is not edited by ProRS. This is Proline--tRNA ligase from Saccharophagus degradans (strain 2-40 / ATCC 43961 / DSM 17024).